The primary structure comprises 439 residues: Xylose isomerase (439 aa).

Residues histidine 101 and aspartate 104 contribute to the active site. Mg(2+)-binding residues include glutamate 232, glutamate 268, histidine 271, aspartate 296, aspartate 307, aspartate 309, and aspartate 339.

This sequence belongs to the xylose isomerase family. Homotetramer. It depends on Mg(2+) as a cofactor.

Its subcellular location is the cytoplasm. It catalyses the reaction alpha-D-xylose = alpha-D-xylulofuranose. The protein is Xylose isomerase of Serratia proteamaculans (strain 568).